Here is a 231-residue protein sequence, read N- to C-terminus: 2-C-methyl-D-erythritol 4-phosphate cytidylyltransferase (231 aa).

Belongs to the IspD/TarI cytidylyltransferase family. IspD subfamily.

It carries out the reaction 2-C-methyl-D-erythritol 4-phosphate + CTP + H(+) = 4-CDP-2-C-methyl-D-erythritol + diphosphate. The protein operates within isoprenoid biosynthesis; isopentenyl diphosphate biosynthesis via DXP pathway; isopentenyl diphosphate from 1-deoxy-D-xylulose 5-phosphate: step 2/6. Catalyzes the formation of 4-diphosphocytidyl-2-C-methyl-D-erythritol from CTP and 2-C-methyl-D-erythritol 4-phosphate (MEP). In Shewanella piezotolerans (strain WP3 / JCM 13877), this protein is 2-C-methyl-D-erythritol 4-phosphate cytidylyltransferase.